Here is a 258-residue protein sequence, read N- to C-terminus: Regulatory protein RecX (258 aa).

The protein belongs to the RecX family.

It localises to the cytoplasm. Modulates RecA activity. In Streptococcus pyogenes serotype M2 (strain MGAS10270), this protein is Regulatory protein RecX.